The sequence spans 293 residues: Ribosomal RNA small subunit methyltransferase A (293 aa).

Residues asparagine 33, valine 35, glycine 60, glutamate 81, aspartate 111, and asparagine 130 each contribute to the S-adenosyl-L-methionine site.

Belongs to the class I-like SAM-binding methyltransferase superfamily. rRNA adenine N(6)-methyltransferase family. RsmA subfamily.

The protein resides in the cytoplasm. The enzyme catalyses adenosine(1518)/adenosine(1519) in 16S rRNA + 4 S-adenosyl-L-methionine = N(6)-dimethyladenosine(1518)/N(6)-dimethyladenosine(1519) in 16S rRNA + 4 S-adenosyl-L-homocysteine + 4 H(+). Specifically dimethylates two adjacent adenosines (A1518 and A1519) in the loop of a conserved hairpin near the 3'-end of 16S rRNA in the 30S particle. May play a critical role in biogenesis of 30S subunits. This chain is Ribosomal RNA small subunit methyltransferase A, found in Corynebacterium glutamicum (strain R).